The following is a 207-amino-acid chain: Small ribosomal subunit protein uS4 (207 aa).

A disordered region spans residues 31–51 (KCKLDSKPGQHGRTSGARTSD). Residues 97 to 160 (SRLDNVVYRM…KKQARIRESL (64 aa)) enclose the S4 RNA-binding domain.

The protein belongs to the universal ribosomal protein uS4 family. As to quaternary structure, part of the 30S ribosomal subunit. Contacts protein S5. The interaction surface between S4 and S5 is involved in control of translational fidelity.

One of the primary rRNA binding proteins, it binds directly to 16S rRNA where it nucleates assembly of the body of the 30S subunit. Its function is as follows. With S5 and S12 plays an important role in translational accuracy. This is Small ribosomal subunit protein uS4 from Bordetella avium (strain 197N).